A 154-amino-acid chain; its full sequence is Transcriptional repressor NrdR (154 aa).

A zinc finger lies at 3–34; that stretch reads CPFCGNDETKVLESRQVEEGTAVRRRRECERC. Residues 49 to 139 enclose the ATP-cone domain; it reads LIVVKKDGRR…VYREFKDVQR (91 aa).

Belongs to the NrdR family. Zn(2+) serves as cofactor.

In terms of biological role, negatively regulates transcription of bacterial ribonucleotide reductase nrd genes and operons by binding to NrdR-boxes. The sequence is that of Transcriptional repressor NrdR from Desulfitobacterium hafniense (strain DSM 10664 / DCB-2).